Here is a 254-residue protein sequence, read N- to C-terminus: Mitochondrial inner membrane protease ATP23 homolog (254 aa).

A disordered region spans residues 1–32 (MAQSGAKAADLSREPPGEQKPSPSSRQNEEDL). H133 contributes to the a divalent metal cation binding site. Residue E134 is part of the active site. A divalent metal cation is bound at residue H137.

The protein belongs to the peptidase M76 family.

The polypeptide is Mitochondrial inner membrane protease ATP23 homolog (atp23) (Danio rerio (Zebrafish)).